Consider the following 257-residue polypeptide: MEIERLNALSDNYIFLLYDPAQKIAAVVDPAEPEPVFRRLEALQVDLVAIFNTHHHGDHVGANQALINRYPHLCVYGGKEDRGRIPGQQLFLEEGDRVEFAGRWAEVFFVPGHTRAHIAYYFPPVNPGDYGELFCGDTLFSGGCGRLFEGTPGQMVASLTKLRSLPDQTRVWCAHEYTLNNLKFALTVDPNNAALQQRYREVEKHRAEDLPTIPAILGTEKLTNPFLRWDSPALAMTMDSSEPVQVFARLRGKKDNF.

His-54, His-56, Asp-58, His-59, His-113, Asp-137, and His-175 together coordinate Zn(2+).

Belongs to the metallo-beta-lactamase superfamily. Glyoxalase II family. As to quaternary structure, monomer. Zn(2+) serves as cofactor.

The enzyme catalyses an S-(2-hydroxyacyl)glutathione + H2O = a 2-hydroxy carboxylate + glutathione + H(+). Its pathway is secondary metabolite metabolism; methylglyoxal degradation; (R)-lactate from methylglyoxal: step 2/2. Thiolesterase that catalyzes the hydrolysis of S-D-lactoyl-glutathione to form glutathione and D-lactic acid. This Microcystis aeruginosa (strain NIES-843 / IAM M-2473) protein is Hydroxyacylglutathione hydrolase.